The following is a 428-amino-acid chain: Kynureninase (428 aa).

Pyridoxal 5'-phosphate contacts are provided by residues threonine 104, threonine 105, 132 to 135 (FPSD), aspartate 213, histidine 216, and tyrosine 238. Position 239 is an N6-(pyridoxal phosphate)lysine (lysine 239). The pyridoxal 5'-phosphate site is built by tryptophan 267 and threonine 295.

Belongs to the kynureninase family. Homodimer. Pyridoxal 5'-phosphate is required as a cofactor.

The enzyme catalyses L-kynurenine + H2O = anthranilate + L-alanine + H(+). It catalyses the reaction 3-hydroxy-L-kynurenine + H2O = 3-hydroxyanthranilate + L-alanine + H(+). It participates in amino-acid degradation; L-kynurenine degradation; L-alanine and anthranilate from L-kynurenine: step 1/1. It functions in the pathway cofactor biosynthesis; NAD(+) biosynthesis; quinolinate from L-kynurenine: step 2/3. In terms of biological role, catalyzes the cleavage of L-kynurenine (L-Kyn) and L-3-hydroxykynurenine (L-3OHKyn) into anthranilic acid (AA) and 3-hydroxyanthranilic acid (3-OHAA), respectively. The chain is Kynureninase from Bacillus cereus (strain ATCC 14579 / DSM 31 / CCUG 7414 / JCM 2152 / NBRC 15305 / NCIMB 9373 / NCTC 2599 / NRRL B-3711).